Consider the following 108-residue polypeptide: UPF0145 protein ACIAD2946 (108 aa).

Belongs to the UPF0145 family.

The chain is UPF0145 protein ACIAD2946 from Acinetobacter baylyi (strain ATCC 33305 / BD413 / ADP1).